Consider the following 1177-residue polypeptide: Topoisomerase 1-associated factor 1 (1177 aa).

Disordered stretches follow at residues 332–353 (MDQT…GEQE), 576–598 (KKVA…TEDI), 802–830 (ALAA…SILV), 893–1012 (DPPT…DKDM), and 1028–1177 (AFGK…SDSE). Residues 586 to 597 (GDEEGQVSDTED) show a composition bias toward acidic residues. The span at 893–908 (DPPTYEDGKGPEDLIR) shows a compositional bias: basic and acidic residues. Acidic residues predominate over residues 923-934 (FDDDDEEAENAV). Composition is skewed to basic and acidic residues over residues 935 to 955 (EEDH…DGER) and 975 to 1001 (KDRR…FVHD). Residues 1002–1011 (SDEEDDDDKD) show a composition bias toward acidic residues. Over residues 1054 to 1066 (RTKRRKTPPKRKA) the composition is skewed to basic residues. A compositionally biased stretch (acidic residues) spans 1071–1080 (DSDDSDEDVQ). The segment covering 1129-1140 (TTGATASITVKS) has biased composition (polar residues). The segment covering 1145–1155 (MADDDDEEDEA) has biased composition (acidic residues).

This sequence belongs to the timeless family. In terms of assembly, component of the fork protection complex (FPC) consisting of TOF1 and CSM3.

The protein localises to the nucleus. Its function is as follows. Forms a fork protection complex (FPC) with CSM3 and which is required for chromosome segregation during meiosis and DNA damage repair. FPC coordinates leading and lagging strand synthesis and moves with the replication fork. FPC stabilizes replication forks in a configuration that is recognized by replication checkpoint sensors. The chain is Topoisomerase 1-associated factor 1 (TOF1) from Phaeosphaeria nodorum (strain SN15 / ATCC MYA-4574 / FGSC 10173) (Glume blotch fungus).